We begin with the raw amino-acid sequence, 288 residues long: 4-diphosphocytidyl-2-C-methyl-D-erythritol kinase (288 aa).

Residue Lys-13 is part of the active site. 96 to 106 is an ATP binding site; the sequence is PIGGGIGGGSS. Residue Asp-138 is part of the active site.

This sequence belongs to the GHMP kinase family. IspE subfamily.

The enzyme catalyses 4-CDP-2-C-methyl-D-erythritol + ATP = 4-CDP-2-C-methyl-D-erythritol 2-phosphate + ADP + H(+). Its pathway is isoprenoid biosynthesis; isopentenyl diphosphate biosynthesis via DXP pathway; isopentenyl diphosphate from 1-deoxy-D-xylulose 5-phosphate: step 3/6. Its function is as follows. Catalyzes the phosphorylation of the position 2 hydroxy group of 4-diphosphocytidyl-2C-methyl-D-erythritol. The chain is 4-diphosphocytidyl-2-C-methyl-D-erythritol kinase from Aliivibrio salmonicida (strain LFI1238) (Vibrio salmonicida (strain LFI1238)).